Here is a 362-residue protein sequence, read N- to C-terminus: 3-dehydroquinate synthase (362 aa).

NAD(+)-binding positions include 70-75 (DGEKYK), 104-108 (GVIGD), 128-129 (TT), Lys-141, Lys-150, and 168-171 (TLNT). The Zn(2+) site is built by Glu-183, His-246, and His-263.

It belongs to the sugar phosphate cyclases superfamily. Dehydroquinate synthase family. Co(2+) is required as a cofactor. The cofactor is Zn(2+). NAD(+) serves as cofactor.

It localises to the cytoplasm. It catalyses the reaction 7-phospho-2-dehydro-3-deoxy-D-arabino-heptonate = 3-dehydroquinate + phosphate. It participates in metabolic intermediate biosynthesis; chorismate biosynthesis; chorismate from D-erythrose 4-phosphate and phosphoenolpyruvate: step 2/7. Its function is as follows. Catalyzes the conversion of 3-deoxy-D-arabino-heptulosonate 7-phosphate (DAHP) to dehydroquinate (DHQ). The chain is 3-dehydroquinate synthase from Haemophilus influenzae (strain 86-028NP).